The sequence spans 200 residues: Protein OPI10 homolog (200 aa).

It belongs to the OPI10 family.

It is found in the cytoplasm. It localises to the nucleus envelope. The polypeptide is Protein OPI10 homolog (Schizosaccharomyces pombe (strain 972 / ATCC 24843) (Fission yeast)).